The sequence spans 161 residues: MQTIEQQIANVIEESLTDMGFELVLVKFKGVNPKVVEILIDSLNSEKISVEDCTKASRTISAILDVEDLIEAAYSLEVASSGLERPLVKFENYNRFLEREVKIKLKELLNGKTRYQGKIIKAENNKIYLKCEEQEVLIDYDLIKNANLVLTEEVFKKLLKQ.

This sequence belongs to the RimP family.

The protein localises to the cytoplasm. In terms of biological role, required for maturation of 30S ribosomal subunits. The sequence is that of Ribosome maturation factor RimP from Rickettsia conorii (strain ATCC VR-613 / Malish 7).